A 392-amino-acid polypeptide reads, in one-letter code: MNIHEYQGKDILKKFGVSVPRGIVAFSPDEAKQAAQQLFEEQGSPVVVVKAQIHAGGRGKAGGVKLAKSPDEAMEIARQMLGATLVTHQTGPEGKQVSRLLVEEGMNIDREFYVGITLDRSTSRNVLMVSTEGGMEIEKVAEETPDKLLKIQVDPLYGLQGFQAREAAFFLGLEGEQFRNAVTFIIALYNAYMTIDASLAEINPLVVTKEGRVLALDAKINFDGNALFRHKNFLELRDTNEEDPFEVEASKSNLNYVRLDGNVGCMVNGAGLAMATMDMIQLAGGRPANFLDVGGGASPETVEEGFKIILSDKNVRAILVNIFGGIVRCDRVAGGIIQAARKIGLNLPVIVRLEGTNAEIAQKMLDESGLNLIAANGLHDAAAKVNQALAAG.

The ATP-grasp domain occupies 9–248; sequence KDILKKFGVS…TNEEDPFEVE (240 aa). Residues K50, 57-59, E103, M106, and E111 contribute to the ATP site; that span reads GRG. Residues N203 and D217 each contribute to the Mg(2+) site. Residues N268 and 325-327 each bind substrate; that span reads GIV.

It belongs to the succinate/malate CoA ligase beta subunit family. As to quaternary structure, heterotetramer of two alpha and two beta subunits. Mg(2+) is required as a cofactor.

The enzyme catalyses succinate + ATP + CoA = succinyl-CoA + ADP + phosphate. It catalyses the reaction GTP + succinate + CoA = succinyl-CoA + GDP + phosphate. It functions in the pathway carbohydrate metabolism; tricarboxylic acid cycle; succinate from succinyl-CoA (ligase route): step 1/1. Its function is as follows. Succinyl-CoA synthetase functions in the citric acid cycle (TCA), coupling the hydrolysis of succinyl-CoA to the synthesis of either ATP or GTP and thus represents the only step of substrate-level phosphorylation in the TCA. The beta subunit provides nucleotide specificity of the enzyme and binds the substrate succinate, while the binding sites for coenzyme A and phosphate are found in the alpha subunit. In Chlorobium limicola (strain DSM 245 / NBRC 103803 / 6330), this protein is Succinate--CoA ligase [ADP-forming] subunit beta.